The sequence spans 461 residues: UDP-N-acetylmuramate--L-alanine ligase (461 aa).

Position 112 to 118 (112 to 118 (GTHGKTT)) interacts with ATP.

The protein belongs to the MurCDEF family.

Its subcellular location is the cytoplasm. The catalysed reaction is UDP-N-acetyl-alpha-D-muramate + L-alanine + ATP = UDP-N-acetyl-alpha-D-muramoyl-L-alanine + ADP + phosphate + H(+). Its pathway is cell wall biogenesis; peptidoglycan biosynthesis. Cell wall formation. This Hydrogenovibrio crunogenus (strain DSM 25203 / XCL-2) (Thiomicrospira crunogena) protein is UDP-N-acetylmuramate--L-alanine ligase.